The chain runs to 247 residues: DNA-directed RNA polymerase subunit Rpo3 (247 aa).

Belongs to the archaeal Rpo3/eukaryotic RPB3 RNA polymerase subunit family. As to quaternary structure, part of the RNA polymerase complex.

It localises to the cytoplasm. It carries out the reaction RNA(n) + a ribonucleoside 5'-triphosphate = RNA(n+1) + diphosphate. In terms of biological role, DNA-dependent RNA polymerase (RNAP) catalyzes the transcription of DNA into RNA using the four ribonucleoside triphosphates as substrates. This is DNA-directed RNA polymerase subunit Rpo3 from Natronomonas pharaonis (strain ATCC 35678 / DSM 2160 / CIP 103997 / JCM 8858 / NBRC 14720 / NCIMB 2260 / Gabara) (Halobacterium pharaonis).